An 85-amino-acid chain; its full sequence is MPLRVTVLYCGAUGYKPKYERLRAELEKRFPGALEMRGQGTQEVTGWFEVTVGSRLVHSKKNGDGFVDTDAKLQRIVAAIQAALP.

Residues 10–13 (CGAU) constitute a cross-link (cysteinyl-selenocysteine (Cys-Sec); redox-active). Residue selenocysteine 13 is a non-standard amino acid, selenocysteine.

It belongs to the SelWTH family. Selenoprotein W subfamily. In terms of tissue distribution, expressed ubiquitously with predominant expression in the pituitary, spinal cord, sciatic nerve, cerebral cortex, cerebral nuclei, thalamus, cerebellum, muscle, cartilage, trachea, gizzard and artery. Weakly expressed in pancreas, testis, ovary, kidney and veins.

The protein resides in the cytoplasm. Its function is as follows. Plays a role as a glutathione (GSH)-dependent antioxidant. May be involved in a redox-related process. May play a role in the myopathies of selenium deficiency. This chain is Selenoprotein W, found in Gallus gallus (Chicken).